Reading from the N-terminus, the 622-residue chain is MTVSKSSLSALTLGAIGVVYGDIGTSVLYAVKEVFGSGHVPFTSDNVYGILSIFFWTLTIIVSLKYVTLVLRADNNGEGGLIAMLALASQSVKDKPALRRVLLLVGIFGTCLFYGDGVITPAISVLSAVEGLEVVSPAFNKFVIPLTLLVLFGLFWVQKRGTAGIGKFFGPITVVWFACIAVLGVAQIATHPTVLWAISPYHALSFIWRQPGTSFIILGAVVLCVTGAEALYADLGHFGKKPIRVAWFAVVMPALTLNYFGQGALLLNNPAAVKNPFFLMAPDWALLPLVGLATLATVIASQALISGAFSVTKQVILLGYLPRLKIMHTNVKEVGQIYLPFVNWGLFVTIVLAVMIFKSSSNLASAYGIAVCTDMLITTILTFFVIRYSWKYPLWLCVAATSFFFVVDFAFWASNLLKLFDGGWFPLLIGGAIFILMITWKDGRRLLNDKLRADAIDLNSFLEAVFVSPPVRVEGTAVFLTVEAGTVPNAMLHNLKHNKVLHANNLFVTVHNHEVPWIGMEKRLEIESLGHDCWQVIINYGFKNDPNIPKALQHIKGRGCDLNDMTTSYFLSRDTIVPTIGSGMAQWREKLFSQMHHNASGAADFLRLPNNAVVELGSKIEI.

12 consecutive transmembrane segments (helical) span residues 11 to 31 (LTLGAIGVVYGDIGTSVLYAV), 50 to 70 (ILSIFFWTLTIIVSLKYVTLV), 101 to 121 (VLLLVGIFGTCLFYGDGVITP), 137 to 157 (PAFNKFVIPLTLLVLFGLFWV), 168 to 188 (FFGPITVVWFACIAVLGVAQI), 215 to 235 (FIILGAVVLCVTGAEALYADL), 247 to 267 (WFAVVMPALTLNYFGQGALLL), 285 to 305 (ALLPLVGLATLATVIASQALI), 337 to 357 (IYLPFVNWGLFVTIVLAVMIF), 366 to 386 (AYGIAVCTDMLITTILTFFVI), 393 to 413 (PLWLCVAATSFFFVVDFAFWA), and 419 to 439 (LFDGGWFPLLIGGAIFILMIT).

Belongs to the HAK/KUP transporter (TC 2.A.72) family.

It is found in the cell inner membrane. The enzyme catalyses K(+)(in) + H(+)(in) = K(+)(out) + H(+)(out). In terms of biological role, transport of potassium into the cell. Likely operates as a K(+):H(+) symporter. This Albidiferax ferrireducens (strain ATCC BAA-621 / DSM 15236 / T118) (Rhodoferax ferrireducens) protein is Probable potassium transport system protein Kup 1.